A 675-amino-acid polypeptide reads, in one-letter code: DNA ligase (675 aa).

Residues 33–37 (DAEYD), 82–83 (SL), and E114 each bind NAD(+). Catalysis depends on K116, which acts as the N6-AMP-lysine intermediate. Positions 137, 174, 291, and 315 each coordinate NAD(+). 4 residues coordinate Zn(2+): C409, C412, C427, and C433. A BRCT domain is found at 595–675 (AGDNPFAGKT…EMIRLLDQSK (81 aa)).

The protein belongs to the NAD-dependent DNA ligase family. LigA subfamily. The cofactor is Mg(2+). Mn(2+) is required as a cofactor.

The catalysed reaction is NAD(+) + (deoxyribonucleotide)n-3'-hydroxyl + 5'-phospho-(deoxyribonucleotide)m = (deoxyribonucleotide)n+m + AMP + beta-nicotinamide D-nucleotide.. Its function is as follows. DNA ligase that catalyzes the formation of phosphodiester linkages between 5'-phosphoryl and 3'-hydroxyl groups in double-stranded DNA using NAD as a coenzyme and as the energy source for the reaction. It is essential for DNA replication and repair of damaged DNA. The polypeptide is DNA ligase (Proteus mirabilis (strain HI4320)).